Consider the following 594-residue polypeptide: Cytoplasmic polyadenylation element-binding protein 2 (594 aa).

Residues lysine 72 to asparagine 90 are compositionally biased toward basic and acidic residues. Disordered regions lie at residues lysine 72–glycine 91 and glycine 367–glutamate 388. Residues glycine 367–asparagine 378 are compositionally biased toward gly residues. Residues leucine 458–phenylalanine 540 enclose the RRM domain.

Its function is as follows. Cytoplasmic polyadenylation element binding protein that binds to and regulates the translation of specific mRNAs. The polypeptide is Cytoplasmic polyadenylation element-binding protein 2 (cpb-2) (Caenorhabditis japonica).